The sequence spans 406 residues: 2,3-diketo-5-methylthiopentyl-1-phosphate enolase (406 aa).

Catalysis depends on Lys94, which acts as the Proton acceptor. Substrate contacts are provided by residues Lys143, Lys169–Glu172, His260, Gly332, and Gly354–Gly355. Lys169, Asp171, and Glu172 together coordinate Mg(2+). The residue at position 169 (Lys169) is an N6-carboxylysine.

It belongs to the RuBisCO large chain family. Type IV subfamily. As to quaternary structure, homodimer. It depends on Mg(2+) as a cofactor.

It catalyses the reaction 5-methylsulfanyl-2,3-dioxopentyl phosphate = 2-hydroxy-5-methylsulfanyl-3-oxopent-1-enyl phosphate. It participates in amino-acid biosynthesis; L-methionine biosynthesis via salvage pathway; L-methionine from S-methyl-5-thio-alpha-D-ribose 1-phosphate: step 3/6. Catalyzes the enolization of 2,3-diketo-5-methylthiopentyl-1-phosphate (DK-MTP-1-P) into 2-hydroxy-3-keto-5-methylthiopentenyl-1-phosphate (HK-MTPenyl-1-P). This chain is 2,3-diketo-5-methylthiopentyl-1-phosphate enolase, found in Bacillus pumilus (strain SAFR-032).